The sequence spans 89 residues: Small ribosomal subunit protein uS15 (89 aa).

It belongs to the universal ribosomal protein uS15 family. In terms of assembly, part of the 30S ribosomal subunit. Forms a bridge to the 50S subunit in the 70S ribosome, contacting the 23S rRNA.

Functionally, one of the primary rRNA binding proteins, it binds directly to 16S rRNA where it helps nucleate assembly of the platform of the 30S subunit by binding and bridging several RNA helices of the 16S rRNA. Its function is as follows. Forms an intersubunit bridge (bridge B4) with the 23S rRNA of the 50S subunit in the ribosome. This is Small ribosomal subunit protein uS15 from Bordetella avium (strain 197N).